Here is a 900-residue protein sequence, read N- to C-terminus: Alanine--tRNA ligase (900 aa).

Positions 604, 608, 708, and 712 each coordinate Zn(2+).

This sequence belongs to the class-II aminoacyl-tRNA synthetase family. Zn(2+) is required as a cofactor.

It localises to the cytoplasm. The catalysed reaction is tRNA(Ala) + L-alanine + ATP = L-alanyl-tRNA(Ala) + AMP + diphosphate. Catalyzes the attachment of alanine to tRNA(Ala) in a two-step reaction: alanine is first activated by ATP to form Ala-AMP and then transferred to the acceptor end of tRNA(Ala). Also edits incorrectly charged Ser-tRNA(Ala) and Gly-tRNA(Ala) via its editing domain. This chain is Alanine--tRNA ligase, found in Saccharolobus islandicus (strain L.S.2.15 / Lassen #1) (Sulfolobus islandicus).